A 341-amino-acid chain; its full sequence is Protein arginine N-methyltransferase 1 (341 aa).

Positions 20–315 constitute an SAM-dependent MTase PRMT-type domain; that stretch reads ADYYFDSYSH…DCAPFDKNQR (296 aa). The S-adenosyl-L-methionine site is built by His33, Arg42, Gly66, Asp88, and Glu117. Catalysis depends on residues Glu132 and Glu141.

The protein belongs to the class I-like SAM-binding methyltransferase superfamily. Protein arginine N-methyltransferase family.

It localises to the nucleus. Its subcellular location is the cytoplasm. The protein localises to the cytosol. It catalyses the reaction L-arginyl-[protein] + 2 S-adenosyl-L-methionine = N(omega),N(omega)-dimethyl-L-arginyl-[protein] + 2 S-adenosyl-L-homocysteine + 2 H(+). It carries out the reaction L-arginyl-[protein] + S-adenosyl-L-methionine = N(omega)-methyl-L-arginyl-[protein] + S-adenosyl-L-homocysteine + H(+). In terms of biological role, arginine methyltransferase that methylates the guanidino nitrogens of arginyl residues present in proteins such as ribonucleoproteins and histones. The protein is Protein arginine N-methyltransferase 1 (prmt1) of Dictyostelium discoideum (Social amoeba).